The primary structure comprises 821 residues: DNA replication licensing factor MCM6 (821 aa).

Met1 carries the post-translational modification N-acetylmethionine. Phosphoserine occurs at positions 13, 219, and 271. A Phosphothreonine modification is found at Thr278. One can recognise an MCM domain in the interval Leu346–Val553. Residues His359, Ser399, Thr400, Ala401, Lys402, Ser403, and Asn504 each coordinate ATP. The Arginine finger motif lies at Ser528–Asp531. ADP-binding residues include Arg619 and Glu622. Lys643 bears the N6-acetyllysine mark. The interval Thr676–Val708 is disordered. Residues Ser689, Ser704, and Ser762 each carry the phosphoserine modification. Residues Phe696 to Val708 are compositionally biased toward polar residues. Thr791 is subject to Phosphothreonine.

The protein belongs to the MCM family. In terms of assembly, component of the MCM2-7 complex. The complex forms a toroidal hexameric ring with the proposed subunit order MCM2-MCM6-MCM4-MCM7-MCM3-MCM5. Component of the CMG helicase complex, a hexameric ring of related MCM2-7 subunits stabilized by CDC45 and the tetrameric GINS complex. May interact with MCM10. Interacts with TIPIN. Interacts with CDT1. Interacts with MCMBP. Interacts with DDI2. O-glycosylated (O-GlcNAcylated), in a cell cycle-dependent manner.

The protein localises to the nucleus. It is found in the chromosome. It carries out the reaction ATP + H2O = ADP + phosphate + H(+). Functionally, acts as a component of the MCM2-7 complex (MCM complex) which is the replicative helicase essential for 'once per cell cycle' DNA replication initiation and elongation in eukaryotic cells. Core component of CDC45-MCM-GINS (CMG) helicase, the molecular machine that unwinds template DNA during replication, and around which the replisome is built. The active ATPase sites in the MCM2-7 ring are formed through the interaction surfaces of two neighboring subunits such that a critical structure of a conserved arginine finger motif is provided in trans relative to the ATP-binding site of the Walker A box of the adjacent subunit. The six ATPase active sites, however, are likely to contribute differentially to the complex helicase activity. The polypeptide is DNA replication licensing factor MCM6 (Mcm6) (Mus musculus (Mouse)).